The primary structure comprises 322 residues: Probable 2-oxoglutarate-dependent dioxygenase AOP1 (322 aa).

Residues 165 to 271 (TYYLTRLMKY…RYSTGLFSIP (107 aa)) enclose the Fe2OG dioxygenase domain. H195, D197, and H252 together coordinate Fe cation. Residue R262 coordinates 2-oxoglutarate.

The protein belongs to the iron/ascorbate-dependent oxidoreductase family. It depends on Fe(2+) as a cofactor.

Probable 2-oxoglutarate-dependent dioxygenase that may be involved in glucosinolates biosynthesis. May play a role in the production of aliphatic glucosinolates. The sequence is that of Probable 2-oxoglutarate-dependent dioxygenase AOP1 (AOP1) from Arabidopsis thaliana (Mouse-ear cress).